A 582-amino-acid polypeptide reads, in one-letter code: Vesicular glutamate transporter 2 (582 aa).

Over 1 to 71 (MESVKQRILA…CTCFGLPRRY (71 aa)) the chain is Cytoplasmic. A helical transmembrane segment spans residues 72-92 (IIAIMSGLGFCISFGIRCNLG). Residues 93–125 (VAIVDMVNNSTIHRGGKVIKEKAKFNWDPETVG) lie on the Vesicular side of the membrane. Asn-100 and Asn-101 each carry an N-linked (GlcNAc...) asparagine glycan. The chain crosses the membrane as a helical span at residues 126–146 (MIHGSFFWGYIITQIPGGYIA). At 147–148 (SR) the chain is on the cytoplasmic side. A helical transmembrane segment spans residues 149–169 (LAANRVFGAAILLTSTLNMLI). Topologically, residues 170 to 177 (PSAARVHY) are vesicular. A helical membrane pass occupies residues 178–198 (GCVIFVRILQGLVEGVTYPAC). Residues 199–216 (HGIWSKWAPPLERSRLAT) are Cytoplasmic-facing. The helical transmembrane segment at 217-237 (TSFCGSYAGAVIAMPLAGILV) threads the bilayer. Residues 238 to 244 (QYTGWSS) lie on the Vesicular side of the membrane. A helical membrane pass occupies residues 245–265 (VFYVYGSFGMVWYMFWLLVSY). Residues 266-310 (ESPAKHPTITDEERRYIEESIGESANLLGAMEKFKTPWRKFFTSM) lie on the Cytoplasmic side of the membrane. The chain crosses the membrane as a helical span at residues 311–331 (PVYAIIVANFCRSWTFYLLLI). Over 332 to 349 (SQPAYFEEVFGFEISKVG) the chain is Vesicular. Residues 350–370 (MLSAVPHLVMTIIVPIGGQIA) traverse the membrane as a helical segment. Residues 371 to 386 (DFLRSKQILSTTTVRK) are Cytoplasmic-facing. The helical transmembrane segment at 387 to 407 (IMNCGGFGMEATLLLVVGYSH) threads the bilayer. Residues 408–409 (TR) lie on the Vesicular side of the membrane. The helical transmembrane segment at 410–430 (GVAISFLVLAVGFSGFAISGF) threads the bilayer. The Cytoplasmic portion of the chain corresponds to 431-443 (NVNHLDIAPRYAS). A helical membrane pass occupies residues 444 to 464 (ILMGISDGVGTLSGMVCPIIV). At 465-477 (GAMTKNKSREEWQ) the chain is on the vesicular side. A glycan (N-linked (GlcNAc...) asparagine) is linked at Asn-470. Residues 478–498 (YVFLIAALVHYGGVIFYALFA) traverse the membrane as a helical segment. At 499–582 (SGEKQPWADP…YTYKDRDDYS (84 aa)) the chain is on the cytoplasmic side.

This sequence belongs to the major facilitator superfamily. Sodium/anion cotransporter family. VGLUT subfamily. As to expression, expressed in brain. Expressed in hippocampal neurons (at protein level).

Its subcellular location is the cytoplasmic vesicle. It localises to the secretory vesicle. It is found in the synaptic vesicle membrane. The protein resides in the synapse. The protein localises to the synaptosome. Its subcellular location is the cell membrane. The enzyme catalyses L-glutamate(out) = L-glutamate(in). The catalysed reaction is K(+)(in) + H(+)(out) = K(+)(out) + H(+)(in). It catalyses the reaction 3 Na(+)(out) + phosphate(out) = 3 Na(+)(in) + phosphate(in). It carries out the reaction phosphate(in) = phosphate(out). The enzyme catalyses chloride(in) = chloride(out). Chloride channel activity is allosterically activated by lumenal H(+) and Cl(-) leading to synaptic vesicles acidification. The L-glutamate transport activity is allosterically activated by lumenal H(+) and Cl(-). The allosteric requirement for H(+) efficiently prevents non-vesicular efflux across the plasma membrane. The L-glutamate uniporter activity exhibits a biphasic dependence on chloride concentration. Its function is as follows. Multifunctional transporter that transports L-glutamate as well as multiple ions such as chloride, proton, potassium, sodium and phosphate. At the synaptic vesicle membrane, mainly functions as a uniporter which transports preferentially L-glutamate but also, phosphate from the cytoplasm into synaptic vesicles at presynaptic nerve terminals of excitatory neural cells. The L-glutamate or phosphate uniporter activity is electrogenic and is driven by the proton electrochemical gradient, mainly by the electrical gradient established by the vacuolar H(+)-ATPase across the synaptic vesicle membrane. In addition, functions as a chloride channel that allows a chloride permeation through the synaptic vesicle membrane therefore affects the proton electrochemical gradient and promotes synaptic vesicles acidification. Moreover, functions as a vesicular K(+)/H(+) antiport allowing to maintain the electrical gradient and to decrease chemical gradient and therefore sustain vesicular glutamate uptake. The vesicular H(+)/H(+) antiport activity is electroneutral. At the plasma membrane, following exocytosis, functions as a symporter of Na(+) and phosphate from the extracellular space to the cytoplasm allowing synaptic phosphate homeostasis regulation. The symporter activity is driven by an inside negative membrane potential and is electrogenic. Also involved in the regulation of retinal hyaloid vessel regression during postnatal development. May also play a role in the endocrine glutamatergic system of other tissues such as pineal gland and pancreas. This chain is Vesicular glutamate transporter 2, found in Mus musculus (Mouse).